The primary structure comprises 281 residues: Tetraspanin-5 (281 aa).

Topologically, residues M1 to T7 are cytoplasmic. A helical membrane pass occupies residues V8 to L28. Over W29 to P44 the chain is Extracellular. The helical transmembrane segment at L45–C65 threads the bilayer. Topologically, residues D66–Y74 are cytoplasmic. Residues L75–V95 form a helical membrane-spanning segment. Topologically, residues T96–S221 are extracellular. A helical membrane pass occupies residues L222–F242. The Cytoplasmic portion of the chain corresponds to K243 to Y281.

The protein belongs to the tetraspanin (TM4SF) family.

The protein resides in the membrane. In terms of biological role, may be involved in the regulation of cell differentiation. This is Tetraspanin-5 (TET5) from Arabidopsis thaliana (Mouse-ear cress).